The following is a 222-amino-acid chain: Deoxyribose-phosphate aldolase (222 aa).

The active-site Proton donor/acceptor is Asp89. The Schiff-base intermediate with acetaldehyde role is filled by Lys151. The active-site Proton donor/acceptor is the Lys180.

Belongs to the DeoC/FbaB aldolase family. DeoC type 1 subfamily.

Its subcellular location is the cytoplasm. It catalyses the reaction 2-deoxy-D-ribose 5-phosphate = D-glyceraldehyde 3-phosphate + acetaldehyde. It participates in carbohydrate degradation; 2-deoxy-D-ribose 1-phosphate degradation; D-glyceraldehyde 3-phosphate and acetaldehyde from 2-deoxy-alpha-D-ribose 1-phosphate: step 2/2. In terms of biological role, catalyzes a reversible aldol reaction between acetaldehyde and D-glyceraldehyde 3-phosphate to generate 2-deoxy-D-ribose 5-phosphate. In Acholeplasma laidlawii (strain PG-8A), this protein is Deoxyribose-phosphate aldolase.